The following is a 37-amino-acid chain: Large ribosomal subunit protein bL36c (37 aa).

Belongs to the bacterial ribosomal protein bL36 family.

It localises to the plastid. This is Large ribosomal subunit protein bL36c from Helicosporidium sp. subsp. Simulium jonesii (Green alga).